The sequence spans 274 residues: 2,3,4,5-tetrahydropyridine-2,6-dicarboxylate N-succinyltransferase (274 aa).

Substrate-binding residues include arginine 104 and aspartate 141.

This sequence belongs to the transferase hexapeptide repeat family. As to quaternary structure, homotrimer.

The protein localises to the cytoplasm. It carries out the reaction (S)-2,3,4,5-tetrahydrodipicolinate + succinyl-CoA + H2O = (S)-2-succinylamino-6-oxoheptanedioate + CoA. The protein operates within amino-acid biosynthesis; L-lysine biosynthesis via DAP pathway; LL-2,6-diaminopimelate from (S)-tetrahydrodipicolinate (succinylase route): step 1/3. The protein is 2,3,4,5-tetrahydropyridine-2,6-dicarboxylate N-succinyltransferase of Photorhabdus laumondii subsp. laumondii (strain DSM 15139 / CIP 105565 / TT01) (Photorhabdus luminescens subsp. laumondii).